Consider the following 1052-residue polypeptide: F-box/WD repeat-containing protein 10 (1052 aa).

Residues 169–206 (GLNQDITDVCFSPEKDHSSKSATSQVYWTAKTQHTSLP) form a WD 1 repeat. The F-box domain occupies 276–323 (DFIRYLPIHLSKYILRMLDRHTLNKCASVSQHWAAMAQQVKMDLSAHG). WD repeat units follow at residues 409-447 (SDTW…AIPV), 451-490 (GHAG…CTRI), 493-532 (GHQG…KTFR), 534-569 (KDPI…LVKT), 572-609 (GHEG…ERCL), and 611-652 (AFKH…KVLK). Positions 690 to 719 (YAVEKTKQKKNKEKEEEKEENSLMEILSKC) form a coiled coil. The disordered stretch occupies residues 766–805 (LQSQGKSKSPRRDADDVEKAQKQGQLETPGKLPSHPKKKS). A compositionally biased stretch (basic and acidic residues) spans 775-786 (PRRDADDVEKAQ). Residues 986-1010 (VLLTVKEEKEHQEAKMKEYQAREST) are a coiled coil.

In terms of biological role, probable substrate-recognition component of a SCF (SKP1-CUL1-F-box protein)-type E3 ubiquitin ligase complex which mediates the ubiquitination and subsequent proteasomal degradation of target proteins. Overexpression is leading to degradation of CBX5 and CBX1. This is F-box/WD repeat-containing protein 10 (FBXW10) from Homo sapiens (Human).